A 251-amino-acid chain; its full sequence is Probable phosphatase Sputw3181_2734 (251 aa).

Positions 8, 10, 16, 41, 74, 102, 132, 193, and 195 each coordinate Zn(2+).

This sequence belongs to the PHP family. Zn(2+) serves as cofactor.

In Shewanella sp. (strain W3-18-1), this protein is Probable phosphatase Sputw3181_2734.